The primary structure comprises 274 residues: MQFSKMHGLGNDFMVIDGVTQNVYLTEDVIRKLADRHRGVGFDQLLLVEPPYDPELDFHYRIFNADGSEVAQCGNGARCFARFVTLKGLTNKQDIHVSTAKGKMVLTLKDEEKVRVNMGEPIWEPAQVPFTANKFEKNYILRTDLQTVLCGVVSMGNPHCVLQVEDINLAPVNELGPLLENHERFPERANIGFMQVVNRNHIKLRVFERGAGETQACGSGACGAVAVGIMQGVLDNNVQVDLPGGSLQIEWEGVGHPLYMTGDATHIYDGFIKL.

Positions 11, 44, and 64 each coordinate substrate. Cys-73 serves as the catalytic Proton donor. Residues 74 to 75 (GN), Asn-157, Asn-190, and 208 to 209 (ER) contribute to the substrate site. Catalysis depends on Cys-217, which acts as the Proton acceptor. Residue 218–219 (GS) coordinates substrate.

Belongs to the diaminopimelate epimerase family. Homodimer.

The protein resides in the cytoplasm. The enzyme catalyses (2S,6S)-2,6-diaminopimelate = meso-2,6-diaminopimelate. It functions in the pathway amino-acid biosynthesis; L-lysine biosynthesis via DAP pathway; DL-2,6-diaminopimelate from LL-2,6-diaminopimelate: step 1/1. Functionally, catalyzes the stereoinversion of LL-2,6-diaminopimelate (L,L-DAP) to meso-diaminopimelate (meso-DAP), a precursor of L-lysine and an essential component of the bacterial peptidoglycan. In Actinobacillus pleuropneumoniae serotype 7 (strain AP76), this protein is Diaminopimelate epimerase.